Reading from the N-terminus, the 63-residue chain is Putative alpha-neurotoxin RjAa9 (63 aa).

Positions 1–60 constitute an LCN-type CS-alpha/beta domain; sequence KEGYPVDWGNCKYECMSDEYCKDLCADRKATSGYCYKLNWSCYCKGLPDDSPIKTPGKCR. 4 cysteine pairs are disulfide-bonded: Cys-11–Cys-59, Cys-15–Cys-35, Cys-21–Cys-42, and Cys-25–Cys-44.

The protein belongs to the long (4 C-C) scorpion toxin superfamily. Sodium channel inhibitor family. Alpha subfamily. In terms of tissue distribution, expressed by the venom gland.

The protein resides in the secreted. Functionally, alpha toxins bind voltage-independently at site-3 of sodium channels (Nav) and inhibits the inactivation of the activated channels, thereby blocking neuronal transmission. The protein is Putative alpha-neurotoxin RjAa9 of Rhopalurus junceus (Caribbean blue scorpion).